Consider the following 348-residue polypeptide: Dihydroorotase (348 aa).

2 residues coordinate Zn(2+): His-17 and His-19. Substrate contacts are provided by residues 19–21 (HLR) and Asn-45. Positions 103, 140, and 178 each coordinate Zn(2+). An N6-carboxylysine modification is found at Lys-103. Substrate is bound at residue His-140. Leu-223 is a substrate binding site. Asp-251 provides a ligand contact to Zn(2+). Residue Asp-251 is part of the active site. 2 residues coordinate substrate: His-255 and Ala-267.

This sequence belongs to the metallo-dependent hydrolases superfamily. DHOase family. Class II DHOase subfamily. In terms of assembly, homodimer. The cofactor is Zn(2+).

It catalyses the reaction (S)-dihydroorotate + H2O = N-carbamoyl-L-aspartate + H(+). It participates in pyrimidine metabolism; UMP biosynthesis via de novo pathway; (S)-dihydroorotate from bicarbonate: step 3/3. Its function is as follows. Catalyzes the reversible cyclization of carbamoyl aspartate to dihydroorotate. The protein is Dihydroorotase of Edwardsiella ictaluri (strain 93-146).